The chain runs to 551 residues: Transcription factor 7-like 1-B (551 aa).

Gly residues predominate over residues 1–11; the sequence is MPQLNSGGGDE. The interval 1–61 is interaction with CTNNB1-A; the sequence is MPQLNSGGGD…SENHSSDSDS (61 aa). Disordered regions lie at residues 1-77, 183-213, 391-474, and 492-515; these read MPQL…EKPR, GTPP…PYYP, WSAR…SLTT, and SPSS…SRPI. Basic and acidic residues-rich tracts occupy residues 17–32 and 52–77; these read ELIR…EKSP and SENH…EKPR. Residues 109-312 form an interaction with AES and TLE4-A region; the sequence is LGGHYLPNGA…SPNLSTKSNV (204 aa). A DNA-binding region (HMG box) is located at residues 324-392; that stretch reads IKKPLNAFML…LHSQLYPSWS (69 aa). Over residues 407–416 the composition is skewed to basic and acidic residues; it reads KQSPEMENYT. The segment at 408-551 is interaction with CTBP-B; sequence QSPEMENYTK…PLSLVTRSSD (144 aa). Over residues 445–464 the composition is skewed to low complexity; it reads SPATPSAALASPAAPAATHS. Residues 465 to 474 show a composition bias toward polar residues; the sequence is EQAQPLSLTT.

Belongs to the TCF/LEF family. In terms of assembly, interacts with csnk1e, ctnnb1-A, ctbp-B, dact1-A and gsk3b. May interact with ase and tle4-A. Interacts with tle1-B. Phosphorylated. Phosphorylation by csnk1e promotes binding to ctnnb1-A while phosphorylation by gsk3b may reverse this effect.

The protein resides in the nucleus. Its function is as follows. Participates in the Wnt signaling pathway. Binds to DNA and acts as a repressor in the absence of ctnnb1-A and possibly ctnnb1-B, and as an activator in the presence of these proteins. Required early in development for the establishment of the dorsal body axis in response to maternal Wnt signaling. The sequence is that of Transcription factor 7-like 1-B (tcf7l1-b) from Xenopus laevis (African clawed frog).